The sequence spans 1510 residues: MPPSFPSLPLPEAVAATAHAALLALAALLLLLRAARALASRCASCLKAPRRRGGPAVVVGDGAGGALAAATAGAWHRAVLASCAYALLSQVAVLSYEVAVAGSRVSARALLLPAVQAVSWAALLALALQARAVGWARFPALVRLWWVVSFALCVVIAYDDSRRLIGQGARAVDYAHMVANFASVPALGFLCLVGVMGSTGLELEFTEDGNGLHEPLLLGRQRREAEEELGCLRVTPYADAGILSLATLSWLSPLLSVGAQRPLELADIPLLAHKDRAKSCYKAMSAHYERQRLEYPGREPSLTWAILKSFWREAAVNGTFAAVNTIVSYVGPYLISYFVDYLSGNIAFPHEGYILASIFFVAKLLETLTARQWYLGVDIMGIHVKSGLTAMVYRKGLRLSNASRQSHTSGEIVNYMAVDVQRVGDYAWYFHDIWMLPLQIILALAILYKNVGIAMVSTLVATVLSIAASVPVAKLQEHYQDKLMASKDERMRKTSECLKNMRILKLQAWEDRYRLQLEEMRNVECRWLRWALYSQAAVTFVFWSSPIFVAVITFGTCILLGGQLTAGGVLSALATFRILQEPLRNFPDLISMMAQTRVSLDRLSHFLQQEELPDDATINVPQSSTDKAVDIKDGAFSWNPYTLTPTLSDIHLSVVRGMRVAVCGVIGSGKSSLLSSILGEIPKLCGHVRISGTAAYVPQTAWIQSGNIEENILFGSQMDRQRYKRVIAACCLKKDLELLQYGDQTVIGDRGINLSGGQKQRVQLARALYQDADIYLLDDPFSAVDAHTGSELFKEYILTALATKTVIYVTHQVEFLPAADLILVLKDGHITQAGKYDDLLQAGTDFNALVSAHKEAIETMDIFEDSDSDTVSSIPNKRLTPSISNIDNLKNKMCENGQPSNTRGIKEKKKKEERKKKRTVQEEERERGKVSSKVYLSYMGEAYKGTLIPLIILAQTMFQVLQIASNWWMAWANPQTEGDAPKTDSVVLLVVYMSLAFGSSLFVFMRSLLVATFGLAAAQKLFIKMLRCVFRAPMSFFDTTPSGRILNRVSVDQSVVDLDIAFRLGGFASTTIQLLGIVAVMSKVTWQVLILIVPMAVACMWMQRYYIASSRELTRILSVQKSPVIHLFSESIAGAATIRGFGQEKRFMKRNLYLLDCFARPLFSSLAAIEWLCLRMELLSTFVFAFCMAILVSFPPGTIEPSMAGLAVTYGLNLNARMSRWILSFCKLENRIISVERIYQYCRLPSEAPLIIENCRPPSSWPQNGNIELIDLKVRYKDDLPLVLHGVSCMFPGGKKIGIVGRTGSGKSTLIQALFRLIEPTGGKIIIDNIDISAIGLHDLRSRLSIIPQDPTLFEGTIRMNLDPLEECTDQEIWEALEKCQLGEVIRSKEEKLDSPVLENGDNWSVGQRQLIALGRALLKQAKILVLDEATASVDTATDNLIQKIIRSEFKDCTVCTIAHRIPTVIDSDLVLVLSDGKIAEFDTPQRLLEDKSSMFIQLVSEYSTRSSCI.

The next 12 helical transmembrane spans lie at 12–32, 55–75, 78–98, 109–129, 138–158, 177–197, 319–339, 342–362, 373–393, 427–447, 453–473, and 540–560; these read EAVA…LLLL, PAVV…AGAW, AVLA…SYEV, ALLL…LALQ, FPAL…VIAY, MVAN…GVMG, TFAA…SYFV, LSGN…FFVA, WYLG…AMVY, AWYF…LAIL, IAMV…VPVA, and FVFW…CILL. In terms of domain architecture, ABC transmembrane type-1 1 spans 320-595; sequence FAAVNTIVSY…FPDLISMMAQ (276 aa). One can recognise an ABC transporter 1 domain in the interval 629-852; sequence VDIKDGAFSW…GTDFNALVSA (224 aa). 664-671 contacts ATP; it reads GVIGSGKS. The disordered stretch occupies residues 889 to 925; it reads LKNKMCENGQPSNTRGIKEKKKKEERKKKRTVQEEER. Positions 906–918 are enriched in basic residues; the sequence is KEKKKKEERKKKR. The next 6 helical transmembrane spans lie at 945–965, 985–1005, 1060–1082, 1086–1108, 1154–1174, and 1179–1199; these read GTLI…QIAS, SVVL…FVFM, IAFR…AVMS, WQVL…YYIA, LLDC…WLCL, and LSTF…PGTI. The ABC transmembrane type-1 2 domain maps to 950 to 1220; the sequence is LIILAQTMFQ…GLNLNARMSR (271 aa). In terms of domain architecture, ABC transporter 2 spans 1267–1501; that stretch reads IELIDLKVRY…KSSMFIQLVS (235 aa). 1301–1308 contributes to the ATP binding site; it reads GRTGSGKS.

The protein belongs to the ABC transporter superfamily. ABCC family. Conjugate transporter (TC 3.A.1.208) subfamily. As to expression, expressed in roots, leaves, stalks, tassels, silks, developing seeds and developing embryos.

The protein localises to the membrane. ABC transporter that may affect phytic acid transport and compartmentalization. May function directly or indirectly in removing phytic acid from the cytosol or in vesicle trafficking. Required for phytic acid accumulation in developing seeds. Phytic acid is the primary storage form of phosphorus in cereal grains and other plant seeds. This chain is ABC transporter C family MRP4, found in Zea mays (Maize).